The chain runs to 530 residues: Probable 1,4-beta-D-glucan cellobiohydrolase B (530 aa).

A signal peptide spans 1 to 26 (MLASTFSYRMYKTALILAALLGSGQA). The interval 27-461 (QQVGTSQAEV…SNIKVGPIGS (435 aa)) is catalytic. The active-site Nucleophile is glutamate 238. Glutamate 243 functions as the Proton donor in the catalytic mechanism. Asparagine 296 carries N-linked (GlcNAc...) asparagine glycosylation. Positions 462–492 (TFNSGGSNPGGGTTTTAKPTTTTTTAGSPGG) are disordered. Residues 462 to 494 (TFNSGGSNPGGGTTTTAKPTTTTTTAGSPGGTG) form a ser/Thr-rich linker region. Positions 475–488 (TTTAKPTTTTTTAG) are enriched in low complexity. Positions 494–530 (GVAQHYGQCGGNGWQGPTTCASPYTCQKLNDFYSQCL) constitute a CBM1 domain. Cystine bridges form between cysteine 502-cysteine 519 and cysteine 513-cysteine 529.

This sequence belongs to the glycosyl hydrolase 7 (cellulase C) family.

It localises to the secreted. The enzyme catalyses Hydrolysis of (1-&gt;4)-beta-D-glucosidic linkages in cellulose and cellotetraose, releasing cellobiose from the non-reducing ends of the chains.. The biological conversion of cellulose to glucose generally requires three types of hydrolytic enzymes: (1) Endoglucanases which cut internal beta-1,4-glucosidic bonds; (2) Exocellobiohydrolases that cut the disaccharide cellobiose from the non-reducing end of the cellulose polymer chain; (3) Beta-1,4-glucosidases which hydrolyze the cellobiose and other short cello-oligosaccharides to glucose. This is Probable 1,4-beta-D-glucan cellobiohydrolase B (cbhB) from Neosartorya fischeri (strain ATCC 1020 / DSM 3700 / CBS 544.65 / FGSC A1164 / JCM 1740 / NRRL 181 / WB 181) (Aspergillus fischerianus).